The primary structure comprises 182 residues: Isopentenyl-diphosphate Delta-isomerase (182 aa).

Mn(2+) is bound by residues H25 and H32. One can recognise a Nudix hydrolase domain in the interval 30-164; the sequence is LLHLAFSSWL…PWAFSPWMVM (135 aa). C67 is an active-site residue. Position 69 (H69) interacts with Mn(2+). E87 is a Mg(2+) binding site. E114 and E116 together coordinate Mn(2+). The active site involves E116.

It belongs to the IPP isomerase type 1 family. In terms of assembly, homodimer. Mg(2+) is required as a cofactor. Requires Mn(2+) as cofactor.

The protein localises to the cytoplasm. The catalysed reaction is isopentenyl diphosphate = dimethylallyl diphosphate. Its pathway is isoprenoid biosynthesis; dimethylallyl diphosphate biosynthesis; dimethylallyl diphosphate from isopentenyl diphosphate: step 1/1. Catalyzes the 1,3-allylic rearrangement of the homoallylic substrate isopentenyl (IPP) to its highly electrophilic allylic isomer, dimethylallyl diphosphate (DMAPP). This is Isopentenyl-diphosphate Delta-isomerase from Shigella flexneri serotype 5b (strain 8401).